The chain runs to 395 residues: General transcription factor IIH subunit 2-like protein (395 aa).

A VWFA domain is found at 60-236 (HLYVVVDGSR…HYKELLTHHL (177 aa)). Phosphotyrosine is present on tyrosine 95. Residues 291–308 (CPQCRAKYCELPVECKIC) form a C4-type zinc finger.

It belongs to the GTF2H2 family.

The protein resides in the nucleus. Its function is as follows. Component of the core-TFIIH basal transcription factor involved in nucleotide excision repair (NER) of DNA and, when complexed to CAK, in RNA transcription by RNA polymerase II. This chain is General transcription factor IIH subunit 2-like protein (GTF2H2C), found in Homo sapiens (Human).